Reading from the N-terminus, the 207-residue chain is dTTP/UTP pyrophosphatase (207 aa).

Catalysis depends on Asp87, which acts as the Proton acceptor.

The protein belongs to the Maf family. YhdE subfamily. It depends on a divalent metal cation as a cofactor.

It localises to the cytoplasm. The catalysed reaction is dTTP + H2O = dTMP + diphosphate + H(+). It carries out the reaction UTP + H2O = UMP + diphosphate + H(+). Functionally, nucleoside triphosphate pyrophosphatase that hydrolyzes dTTP and UTP. May have a dual role in cell division arrest and in preventing the incorporation of modified nucleotides into cellular nucleic acids. The protein is dTTP/UTP pyrophosphatase of Nitrosomonas europaea (strain ATCC 19718 / CIP 103999 / KCTC 2705 / NBRC 14298).